The chain runs to 405 residues: Coiled-coil domain-containing protein 91 (405 aa).

The tract at residues 1 to 16 (MDDDDFGGFEAAETFD) is GGA1-binding motif. A disordered region spans residues 1 to 27 (MDDDDFGGFEAAETFDGGNGETQTTSP). Phosphoserine is present on residues S43 and S46. A coiled-coil region spans residues 126–376 (GANVSNIQLR…QKRLDQVIRQ (251 aa)). Positions 210-377 (LSIIVDEYKH…KRLDQVIRQR (168 aa)) are homodimerization.

In terms of assembly, homodimer. Interacts with GGA1, GGA2 and AP1G1.

It is found in the membrane. The protein localises to the golgi apparatus. It localises to the trans-Golgi network membrane. The protein resides in the trans-Golgi network. Functionally, involved in the regulation of membrane traffic through the trans-Golgi network (TGN). Functions in close cooperation with the GGAs in the sorting of hydrolases to lysosomes. The sequence is that of Coiled-coil domain-containing protein 91 (CCDC91) from Pongo abelii (Sumatran orangutan).